The sequence spans 329 residues: Acetyl-coenzyme A carboxylase carboxyl transferase subunit alpha (329 aa).

The CoA carboxyltransferase C-terminal domain occupies 40 to 294 (QLETLAARRR…KNALEKHLSE (255 aa)).

It belongs to the AccA family. Acetyl-CoA carboxylase is a heterohexamer composed of biotin carboxyl carrier protein (AccB), biotin carboxylase (AccC) and two subunits each of ACCase subunit alpha (AccA) and ACCase subunit beta (AccD).

The protein localises to the cytoplasm. The catalysed reaction is N(6)-carboxybiotinyl-L-lysyl-[protein] + acetyl-CoA = N(6)-biotinyl-L-lysyl-[protein] + malonyl-CoA. The protein operates within lipid metabolism; malonyl-CoA biosynthesis; malonyl-CoA from acetyl-CoA: step 1/1. Component of the acetyl coenzyme A carboxylase (ACC) complex. First, biotin carboxylase catalyzes the carboxylation of biotin on its carrier protein (BCCP) and then the CO(2) group is transferred by the carboxyltransferase to acetyl-CoA to form malonyl-CoA. The polypeptide is Acetyl-coenzyme A carboxylase carboxyl transferase subunit alpha (Prochlorococcus marinus (strain NATL1A)).